A 429-amino-acid chain; its full sequence is Ribosomal RNA small subunit methyltransferase B (429 aa).

S-adenosyl-L-methionine-binding positions include 254-260 (CAAPGGK), Asp277, Asp303, and Asp322. The active-site Nucleophile is the Cys375.

It belongs to the class I-like SAM-binding methyltransferase superfamily. RsmB/NOP family.

Its subcellular location is the cytoplasm. The enzyme catalyses cytidine(967) in 16S rRNA + S-adenosyl-L-methionine = 5-methylcytidine(967) in 16S rRNA + S-adenosyl-L-homocysteine + H(+). Functionally, specifically methylates the cytosine at position 967 (m5C967) of 16S rRNA. This chain is Ribosomal RNA small subunit methyltransferase B, found in Escherichia coli O17:K52:H18 (strain UMN026 / ExPEC).